A 137-amino-acid chain; its full sequence is MARTKQTARKSTGGKGPRKELATKAARKTRRPYRGGVKRAHRFRPGTVALREIRKYQKSTDLLIRKLPFQRLVREIAQDFKVDLRFQSHAVLALQEAAEAYLVGLFEDTNLCAIHAKRVTIMSKDIQLARRIRGERA.

The interval 1-36 is disordered; it reads MARTKQTARKSTGGKGPRKELATKAARKTRRPYRGG. N6,N6,N6-trimethyllysine; alternate occurs at positions 5 and 10. 2 positions are modified to N6,N6-dimethyllysine; alternate: lysine 5 and lysine 10. Residues lysine 5 and lysine 10 each carry the N6-methyllysine; alternate modification. Lysine 10 bears the N6-acetyllysine; alternate mark. Serine 11 carries the post-translational modification Phosphoserine. Residue threonine 12 is modified to Phosphothreonine. Lysine 15 carries the N6-acetyllysine modification. Lysine 19, lysine 24, lysine 28, and lysine 38 each carry N6-methyllysine; alternate. N6-acetyllysine; alternate is present on residues lysine 19 and lysine 24. A compositionally biased stretch (basic residues) spans 25 to 36; sequence AARKTRRPYRGG. Lysine 28 and lysine 38 each carry N6,N6,N6-trimethyllysine; alternate. N6,N6-dimethyllysine; alternate occurs at positions 28 and 38.

This sequence belongs to the histone H3 family. As to quaternary structure, the nucleosome is a histone octamer containing two molecules each of H2A, H2B, H3 and H4 assembled in one H3-H4 heterotetramer and two H2A-H2B heterodimers. The octamer wraps approximately 147 bp of DNA. As to expression, pollen specific.

It localises to the nucleus. It is found in the chromosome. Core component of nucleosome. Nucleosomes wrap and compact DNA into chromatin, limiting DNA accessibility to the cellular machineries which require DNA as a template. Histones thereby play a central role in transcription regulation, DNA repair, DNA replication and chromosomal stability. DNA accessibility is regulated via a complex set of post-translational modifications of histones, also called histone code, and nucleosome remodeling. The polypeptide is Histone H3-like 2 (MGH3) (Arabidopsis thaliana (Mouse-ear cress)).